Consider the following 510-residue polypeptide: MSQSALHTEFGDIAGLRAALAERRVSAVELAESGLAAAQAAAGLNAFLHIDPELTLVQARAADAALAAGTAGPLAGIPIAHKDAFVTRGWRSTAGSKMLRDYLSPFDATVVERLQAAGAVSLGKLNCDEFAMGSGNENSAFGPARNPWDLAAVPGGSSGGSAAAVAARLVAGATGTDTGGSVRQPAALCGVSGIKPTYGTVSRYGMIAFGSSLDQAGPLAPSSRDLLELLDVMSGFDPRDATSLERCDDAANAPGRIRAAFDAAQNGYQAAGSQPLKGLRIGVPAEFFGAGLTPDVAAAVEAALRQFEALGAERVAISLPRTELAIPAYYVIAPAEASSNLARFDGVRYGHRAAEYSDLNEMISRSRAEGFGDEVKRRILIGAYVLSHGYYDAYYLQAQRLRRLIAQDFQRAFAGQCDVIMGPVAPSVAKNIGENRDDPTADWLADVYTLGVSLAGLPAMSVPCGFGAAGRPVGLQIIGNYFDEGRLLAIADRYQQVTDWHQRTPATQDA.

Active-site charge relay system residues include Lys-82 and Ser-157. Ser-181 serves as the catalytic Acyl-ester intermediate.

The protein belongs to the amidase family. GatA subfamily. Heterotrimer of A, B and C subunits.

It carries out the reaction L-glutamyl-tRNA(Gln) + L-glutamine + ATP + H2O = L-glutaminyl-tRNA(Gln) + L-glutamate + ADP + phosphate + H(+). In terms of biological role, allows the formation of correctly charged Gln-tRNA(Gln) through the transamidation of misacylated Glu-tRNA(Gln) in organisms which lack glutaminyl-tRNA synthetase. The reaction takes place in the presence of glutamine and ATP through an activated gamma-phospho-Glu-tRNA(Gln). The polypeptide is Glutamyl-tRNA(Gln) amidotransferase subunit A (Bordetella avium (strain 197N)).